A 163-amino-acid polypeptide reads, in one-letter code: 2-amino-4-hydroxy-6-hydroxymethyldihydropteridine pyrophosphokinase (163 aa).

Belongs to the HPPK family.

The enzyme catalyses 6-hydroxymethyl-7,8-dihydropterin + ATP = (7,8-dihydropterin-6-yl)methyl diphosphate + AMP + H(+). Its pathway is cofactor biosynthesis; tetrahydrofolate biosynthesis; 2-amino-4-hydroxy-6-hydroxymethyl-7,8-dihydropteridine diphosphate from 7,8-dihydroneopterin triphosphate: step 4/4. Functionally, catalyzes the transfer of pyrophosphate from adenosine triphosphate (ATP) to 6-hydroxymethyl-7,8-dihydropterin, an enzymatic step in folate biosynthesis pathway. This Helicobacter pylori (strain ATCC 700392 / 26695) (Campylobacter pylori) protein is 2-amino-4-hydroxy-6-hydroxymethyldihydropteridine pyrophosphokinase (folK).